Consider the following 169-residue polypeptide: Small ribosomal subunit protein uS5 (169 aa).

One can recognise an S5 DRBM domain in the interval 14 to 77 (LQEKLVAVRR…EQARKNMRKV (64 aa)).

Belongs to the universal ribosomal protein uS5 family. In terms of assembly, part of the 30S ribosomal subunit. Contacts proteins S4 and S8.

With S4 and S12 plays an important role in translational accuracy. Its function is as follows. Located at the back of the 30S subunit body where it stabilizes the conformation of the head with respect to the body. In Methylococcus capsulatus (strain ATCC 33009 / NCIMB 11132 / Bath), this protein is Small ribosomal subunit protein uS5.